The following is a 155-amino-acid chain: Large ribosomal subunit protein eL24 (155 aa).

Basic and acidic residues predominate over residues 97–129 (KPEIRKAKRDEKAKADKEKKKADKAARKADKAK). Residues 97–155 (KPEIRKAKRDEKAKADKEKKKADKAARKADKAKSAATQASKISKQQAKGAFQKVAATSR) are disordered. The span at 133-142 (TQASKISKQQ) shows a compositional bias: polar residues.

The protein belongs to the eukaryotic ribosomal protein eL24 family.

The polypeptide is Large ribosomal subunit protein eL24 (RPL24) (Eremothecium gossypii (strain ATCC 10895 / CBS 109.51 / FGSC 9923 / NRRL Y-1056) (Yeast)).